Consider the following 421-residue polypeptide: ATP-dependent RNA helicase RhlB (421 aa).

Residues 9 to 37 carry the Q motif motif; that stretch reads QKFSDFALHPKVVEALEKKGFHNCTPIQA. The region spanning 40–219 is the Helicase ATP-binding domain; it reads LPLTLAGRDV…FEQMNNAEYI (180 aa). 53–60 is a binding site for ATP; sequence AQTGTGKT. Residues 165–168 carry the DEAD box motif; sequence DEAD. Positions 245–390 constitute a Helicase C-terminal domain; the sequence is RLLQTLIEEE…VSKYNPDALM (146 aa). A disordered region spans residues 392–421; the sequence is DLPKPLRLTRPRTGNGPRRTGAPRNRRRSG. The segment covering 402 to 414 has biased composition (low complexity); it reads PRTGNGPRRTGAP.

This sequence belongs to the DEAD box helicase family. RhlB subfamily. Component of the RNA degradosome, which is a multiprotein complex involved in RNA processing and mRNA degradation.

The protein resides in the cytoplasm. It catalyses the reaction ATP + H2O = ADP + phosphate + H(+). In terms of biological role, DEAD-box RNA helicase involved in RNA degradation. Has RNA-dependent ATPase activity and unwinds double-stranded RNA. The protein is ATP-dependent RNA helicase RhlB of Escherichia coli O157:H7.